A 175-amino-acid polypeptide reads, in one-letter code: Translation initiation factor IF-3 (175 aa).

The protein belongs to the IF-3 family. In terms of assembly, monomer.

The protein localises to the cytoplasm. Functionally, IF-3 binds to the 30S ribosomal subunit and shifts the equilibrium between 70S ribosomes and their 50S and 30S subunits in favor of the free subunits, thus enhancing the availability of 30S subunits on which protein synthesis initiation begins. The protein is Translation initiation factor IF-3 of Chlamydia trachomatis serovar D (strain ATCC VR-885 / DSM 19411 / UW-3/Cx).